A 265-amino-acid chain; its full sequence is Phosphonates import ATP-binding protein PhnC 1 (265 aa).

Positions 7–252 constitute an ABC transporter domain; sequence IEVSNLSKSF…KLNEIYGTAA (246 aa). 39 to 46 contributes to the ATP binding site; that stretch reads GASGSGKS.

It belongs to the ABC transporter superfamily. Phosphonates importer (TC 3.A.1.9.1) family. The complex is composed of two ATP-binding proteins (PhnC), two transmembrane proteins (PhnE) and a solute-binding protein (PhnD).

Its subcellular location is the cell inner membrane. The enzyme catalyses phosphonate(out) + ATP + H2O = phosphonate(in) + ADP + phosphate + H(+). Functionally, part of the ABC transporter complex PhnCDE involved in phosphonates import. Responsible for energy coupling to the transport system. The chain is Phosphonates import ATP-binding protein PhnC 1 from Nostoc sp. (strain PCC 7120 / SAG 25.82 / UTEX 2576).